A 151-amino-acid polypeptide reads, in one-letter code: 18 kDa heat shock protein (151 aa).

In terms of domain architecture, sHSP spans 38-151 (TFNGNAGFKV…KDNGRRIDIH (114 aa)).

The protein belongs to the small heat shock protein (HSP20) family.

Probable chaperone. The chain is 18 kDa heat shock protein (hsp18) from Clostridium acetobutylicum (strain ATCC 824 / DSM 792 / JCM 1419 / IAM 19013 / LMG 5710 / NBRC 13948 / NRRL B-527 / VKM B-1787 / 2291 / W).